The sequence spans 341 residues: Glycerol-3-phosphate dehydrogenase [NAD(P)+] (341 aa).

The NADPH site is built by Ser-15, Trp-16, Arg-36, and Lys-110. The sn-glycerol 3-phosphate site is built by Lys-110, Gly-139, and Ser-141. Ala-143 contacts NADPH. Lys-194, Asp-247, Ser-257, Arg-258, and Asn-259 together coordinate sn-glycerol 3-phosphate. The active-site Proton acceptor is the Lys-194. Arg-258 provides a ligand contact to NADPH. NADPH-binding residues include Val-282 and Glu-284.

This sequence belongs to the NAD-dependent glycerol-3-phosphate dehydrogenase family.

The protein localises to the cytoplasm. The catalysed reaction is sn-glycerol 3-phosphate + NAD(+) = dihydroxyacetone phosphate + NADH + H(+). It carries out the reaction sn-glycerol 3-phosphate + NADP(+) = dihydroxyacetone phosphate + NADPH + H(+). It participates in membrane lipid metabolism; glycerophospholipid metabolism. Its function is as follows. Catalyzes the reduction of the glycolytic intermediate dihydroxyacetone phosphate (DHAP) to sn-glycerol 3-phosphate (G3P), the key precursor for phospholipid synthesis. The protein is Glycerol-3-phosphate dehydrogenase [NAD(P)+] of Stenotrophomonas maltophilia (strain R551-3).